The sequence spans 266 residues: MKAVVLTLAVLFLTGSQARHFWQQDEPQSPWDRVKDLATVYVDAVKEGGRDYVAQFEASALGKQLNLKLLDNWDSLTSTVTKLREQIGPVTQEFWDNLEKETEVLRQEMSKDLEEVKQKVQPYLDEFQKNWHEEVELYRQKVAPLGAELREGARQKLQELQEKLSPLGEELRDRARIHVDALRAQLAPYSDQLRERLAARLQALKEDGGASLAEYHAKASEHLSALSEKAKPALEDLRQGLLPVLESFKVSLLAAVDEAAKKLNAQ.

The N-terminal stretch at 1–18 (MKAVVLTLAVLFLTGSQA) is a signal peptide. A run of 2 repeats spans residues 67-88 (LKLL…EQIG) and 89-110 (PVTQ…QEMS). Residues 67 to 266 (LKLLDNWDSL…DEAAKKLNAQ (200 aa)) are 10 X approximate tandem repeats. Met109 bears the Methionine sulfoxide mark. A 3; half-length repeat occupies 111-121 (KDLEEVKQKVQ). 5 repeat units span residues 122–142 (PYLD…RQKV), 144–165 (PLGA…EKLS), 166–187 (PLGE…AQLA), 188–210 (PYSD…DGGA), and 211–231 (SLAE…EKAK). Residues 232–242 (PALEDLRQGLL) form a 9; half-length repeat. Repeat unit 10 spans residues 243 to 266 (PVLESFKVSLLAAVDEAAKKLNAQ).

The protein belongs to the apolipoprotein A1/A4/E family. As to quaternary structure, homodimer. Interacts with APOA1BP and CLU. Component of a sperm activating protein complex (SPAP), consisting of APOA1, an immunoglobulin heavy chain, an immunoglobulin light chain and albumin. Interacts with NDRG1. Interacts with SCGB3A2. Interacts with NAXE and YJEFN3. Post-translationally, glycosylated. In terms of processing, palmitoylated. Phosphorylation sites are present in the extracellular medium. Major protein of plasma HDL, also found in chylomicrons.

Its subcellular location is the secreted. Functionally, participates in the reverse transport of cholesterol from tissues to the liver for excretion by promoting cholesterol efflux from tissues and by acting as a cofactor for the lecithin cholesterol acyltransferase (LCAT). As part of the SPAP complex, activates spermatozoa motility. In Ailuropoda melanoleuca (Giant panda), this protein is Apolipoprotein A-I (APOA1).